The following is a 168-amino-acid chain: Xanthine-guanine phosphoribosyltransferase (168 aa).

Residues 46–47 (RG) and 101–109 (DDLVDSGVT) each bind 5-phospho-alpha-D-ribose 1-diphosphate. Asp-102 contacts Mg(2+). Guanine is bound at residue Asp-105. Xanthine contacts are provided by Asp-105 and Val-148. Residues 105 to 109 (DSGVT) and 147 to 148 (WV) contribute to the GMP site.

Belongs to the purine/pyrimidine phosphoribosyltransferase family. XGPT subfamily. As to quaternary structure, homotetramer. Mg(2+) serves as cofactor.

It localises to the cell inner membrane. The enzyme catalyses GMP + diphosphate = guanine + 5-phospho-alpha-D-ribose 1-diphosphate. It catalyses the reaction XMP + diphosphate = xanthine + 5-phospho-alpha-D-ribose 1-diphosphate. It carries out the reaction IMP + diphosphate = hypoxanthine + 5-phospho-alpha-D-ribose 1-diphosphate. It participates in purine metabolism; GMP biosynthesis via salvage pathway; GMP from guanine: step 1/1. Its pathway is purine metabolism; XMP biosynthesis via salvage pathway; XMP from xanthine: step 1/1. In terms of biological role, purine salvage pathway enzyme that catalyzes the transfer of the ribosyl-5-phosphate group from 5-phospho-alpha-D-ribose 1-diphosphate (PRPP) to the N9 position of the 6-oxopurines guanine and xanthine to form the corresponding ribonucleotides GMP (guanosine 5'-monophosphate) and XMP (xanthosine 5'-monophosphate), with the release of PPi. To a lesser extent, also acts on hypoxanthine. This Gluconobacter oxydans (strain 621H) (Gluconobacter suboxydans) protein is Xanthine-guanine phosphoribosyltransferase.